The chain runs to 278 residues: 3-oxoacyl-[acyl-carrier-protein] reductase (278 aa).

NADP(+) contacts are provided by threonine 13, arginine 14, isoleucine 16, serine 36, serine 40, threonine 44, aspartate 66, phenylalanine 67, glutamate 77, glycine 122, glutamine 125, and glutamate 126. Serine 182 functions as the Proton donor in the catalytic mechanism. NADP(+) contacts are provided by tyrosine 198, lysine 202, leucine 230, and valine 231. Tyrosine 198 (proton acceptor) is an active-site residue. Lysine 202 serves as the catalytic Lowers pKa of active site Tyr.

This sequence belongs to the short-chain dehydrogenases/reductases (SDR) family.

It is found in the mitochondrion. The enzyme catalyses a (3R)-hydroxyacyl-[ACP] + NADP(+) = a 3-oxoacyl-[ACP] + NADPH + H(+). Its pathway is lipid metabolism; fatty acid biosynthesis. Functionally, involved in biosynthesis of fatty acids in mitochondria. This Saccharomyces cerevisiae (strain ATCC 204508 / S288c) (Baker's yeast) protein is 3-oxoacyl-[acyl-carrier-protein] reductase (OAR1).